The primary structure comprises 409 residues: 3-dehydro-bile acid delta(4,6)-reductase (409 aa).

The FAD site is built by serine 12, glutamate 33, valine 131, glutamate 378, asparagine 390, and leucine 391.

Belongs to the BaiN/RdsA family. BaiN subfamily. It depends on FAD as a cofactor.

It catalyses the reaction 3-oxocholan-24-oyl-CoA + NAD(+) = 3-oxochol-4-en-24-oyl-CoA + NADH + H(+). The catalysed reaction is 3-oxochol-4-en-24-oyl-CoA + NAD(+) = 3-oxochol-4,6-dien-24-oyl-CoA + NADH + H(+). It carries out the reaction 12alpha-hydroxy-3-oxocholan-24-oyl-CoA + NAD(+) = 12alpha-hydroxy-3-oxochol-4-en-24-oyl-CoA + NADH + H(+). The enzyme catalyses 12alpha-hydroxy-3-oxochol-4-en-24-oyl-CoA + NAD(+) = 12alpha-hydroxy-3-oxochola-4,6-dien-24-oyl-CoA + NADH + H(+). The protein operates within lipid metabolism; bile acid degradation. Functionally, involved in the secondary bile acid metabolism. Catalyzes two subsequent reductions of the double bonds within the bile acid A/B rings of 3-oxochol-4,6-dien-24-oyl-CoA and 12alpha-hydroxy-3-oxochol-4,6-dien-24-oyl-CoA to yield 3-oxocholan-24-oyl-CoA and 12alpha-hydroxy-3-oxocholan-24-oyl-CoA, respectively. This Clostridium scindens (strain ATCC 35704 / DSM 5676 / VPI 13733 / 19) protein is 3-dehydro-bile acid delta(4,6)-reductase.